The primary structure comprises 214 residues: Probable transaldolase (214 aa).

The active-site Schiff-base intermediate with substrate is the K83.

The protein belongs to the transaldolase family. Type 3B subfamily.

It is found in the cytoplasm. It catalyses the reaction D-sedoheptulose 7-phosphate + D-glyceraldehyde 3-phosphate = D-erythrose 4-phosphate + beta-D-fructose 6-phosphate. It participates in carbohydrate degradation; pentose phosphate pathway; D-glyceraldehyde 3-phosphate and beta-D-fructose 6-phosphate from D-ribose 5-phosphate and D-xylulose 5-phosphate (non-oxidative stage): step 2/3. Transaldolase is important for the balance of metabolites in the pentose-phosphate pathway. This Leptospira biflexa serovar Patoc (strain Patoc 1 / Ames) protein is Probable transaldolase.